A 173-amino-acid chain; its full sequence is Streptothricin acetyltransferase A (173 aa).

Residues 21–173 (VVFGRMIPAF…EIAIFWYYKF (153 aa)) enclose the N-acetyltransferase domain.

Belongs to the acetyltransferase family. GNAT subfamily. Homodimer.

The catalysed reaction is streptothricin D + acetyl-CoA = N(beta)-acetylstreptothricin D + CoA + H(+). It carries out the reaction streptothricin F + acetyl-CoA = N(beta)-acetylstreptothricin F + CoA + H(+). Functionally, involved in resistance to streptothricin, a broad-spectrum antibiotic produced by streptomycetes. Detoxifies streptothricin via acetylation of the beta amino group of the first beta-lysyl moiety of streptothricin. The polypeptide is Streptothricin acetyltransferase A (Bacillus subtilis (strain 168)).